A 276-amino-acid polypeptide reads, in one-letter code: Shikimate dehydrogenase (NADP(+)) (276 aa).

Shikimate-binding positions include 15–17 and Thr62; that span reads SKS. Lys66 acts as the Proton acceptor in catalysis. Shikimate contacts are provided by Asn87 and Asp103. NADP(+) is bound by residues 127 to 131, 151 to 156, and Met215; these read GAGGA and NRTLSK. Tyr217 serves as a coordination point for shikimate. Gly239 contributes to the NADP(+) binding site.

Belongs to the shikimate dehydrogenase family. As to quaternary structure, homodimer.

It carries out the reaction shikimate + NADP(+) = 3-dehydroshikimate + NADPH + H(+). Its pathway is metabolic intermediate biosynthesis; chorismate biosynthesis; chorismate from D-erythrose 4-phosphate and phosphoenolpyruvate: step 4/7. In terms of biological role, involved in the biosynthesis of the chorismate, which leads to the biosynthesis of aromatic amino acids. Catalyzes the reversible NADPH linked reduction of 3-dehydroshikimate (DHSA) to yield shikimate (SA). In Cellvibrio japonicus (strain Ueda107) (Pseudomonas fluorescens subsp. cellulosa), this protein is Shikimate dehydrogenase (NADP(+)).